Here is a 574-residue protein sequence, read N- to C-terminus: Putative ABC transporter ATP-binding protein VVA0347 (574 aa).

2 consecutive ABC transporter domains span residues 3 to 244 (IEFS…GIRE) and 299 to 533 (LDVR…ANLT). Residues 37–44 (GPSGSGKS) and 332–339 (GKNGSGKS) contribute to the ATP site.

It belongs to the ABC transporter superfamily.

It localises to the cell inner membrane. Probably part of an ABC transporter complex. Responsible for energy coupling to the transport system. The chain is Putative ABC transporter ATP-binding protein VVA0347 from Vibrio vulnificus (strain YJ016).